A 154-amino-acid polypeptide reads, in one-letter code: Myoglobin (154 aa).

In terms of domain architecture, Globin spans 1–147 (MADVKKNCLA…FNDECQHQLA (147 aa)). Heme b is bound at residue histidine 96.

Belongs to the globin family.

It is found in the cytoplasm. This chain is Myoglobin (GLBB), found in Nippostrongylus brasiliensis (Rat hookworm).